The sequence spans 51 residues: Large ribosomal subunit protein eL39 (51 aa).

It belongs to the eukaryotic ribosomal protein eL39 family.

The sequence is that of Large ribosomal subunit protein eL39 (rpl39e) from Thermoplasma acidophilum (strain ATCC 25905 / DSM 1728 / JCM 9062 / NBRC 15155 / AMRC-C165).